The following is a 441-amino-acid chain: Ankyrin repeat and MYND domain-containing protein 2 (441 aa).

3 ANK repeats span residues 45-74, 79-108, and 159-188; these read NGMT…DVNC, HGYT…ETDV, and KLAG…NPLL. Zn(2+)-binding residues include Cys320, Cys323, Cys332, Cys335, Cys341, Cys345, His353, and Cys357. An MYND-type zinc finger spans residues 320 to 357; it reads CTTCGEKGASKRCSVCKMVIYCDQTCQKTHWFTHKKIC. Positions 374–384 are enriched in basic and acidic residues; that stretch reads EKRQEENHGKL. Residues 374 to 441 are disordered; the sequence is EKRQEENHGK…APAGPQVSEE (68 aa).

In terms of assembly, interacts with the retinal-specific guanylyl cyclase GC1.

The protein localises to the cell projection. It localises to the cilium. Its function is as follows. May be involved in the trafficking of signaling proteins to the cilia. The polypeptide is Ankyrin repeat and MYND domain-containing protein 2 (ANKMY2) (Homo sapiens (Human)).